The sequence spans 92 residues: UPF0223 protein SSP1692 (92 aa).

This sequence belongs to the UPF0223 family.

The polypeptide is UPF0223 protein SSP1692 (Staphylococcus saprophyticus subsp. saprophyticus (strain ATCC 15305 / DSM 20229 / NCIMB 8711 / NCTC 7292 / S-41)).